The chain runs to 1183 residues: DNA-directed RNA polymerase subunit beta (1183 aa).

This sequence belongs to the RNA polymerase beta chain family. The RNAP catalytic core consists of 2 alpha, 1 beta, 1 beta' and 1 omega subunit. When a sigma factor is associated with the core the holoenzyme is formed, which can initiate transcription.

The enzyme catalyses RNA(n) + a ribonucleoside 5'-triphosphate = RNA(n+1) + diphosphate. Its function is as follows. DNA-dependent RNA polymerase catalyzes the transcription of DNA into RNA using the four ribonucleoside triphosphates as substrates. This chain is DNA-directed RNA polymerase subunit beta, found in Staphylococcus aureus (strain MRSA252).